The sequence spans 113 residues: Putative anti-sigma factor antagonist TM1081 homolog (113 aa).

The STAS domain occupies 1–110 (MFPYKIVEDV…DTISEALEEV (110 aa)). Phosphoserine is present on serine 55.

This sequence belongs to the anti-sigma-factor antagonist family. In terms of processing, phosphorylated on a serine residue.

Its function is as follows. In the phosphorylated form it could act as an anti-anti-sigma factor that counteracts an anti-sigma factor and thus releases a sigma factor from inhibition. The polypeptide is Putative anti-sigma factor antagonist TM1081 homolog (Thermotoga neapolitana).